A 189-amino-acid chain; its full sequence is Ras-like protein 1 (189 aa).

Residue 10-17 (GAGGVGKS) coordinates GTP. The Effector region signature appears at 32–40 (YDPTIEDSY). Residues 57–61 (DTAGQ) and 116–119 (NKCD) each bind GTP. At C186 the chain carries Cysteine methyl ester. C186 carries the S-geranylgeranyl cysteine lipid modification. Residues 187–189 (KIL) constitute a propeptide, removed in mature form.

This sequence belongs to the small GTPase superfamily. Ras family.

It localises to the cell membrane. The enzyme catalyses GTP + H2O = GDP + phosphate + H(+). Its activity is regulated as follows. Alternates between an inactive form bound to GDP and an active form bound to GTP. Activated by a guanine nucleotide-exchange factor (GEF) and inactivated by a GTPase-activating protein (GAP). Its function is as follows. Ras proteins bind GDP/GTP and possess intrinsic GTPase activity. Plays a role in eye development by regulating cell growth, survival of postmitotic ommatidial cells and differentiation of photoreceptor cells. During larval development, mediates Ptth/tor signaling leading to the production of ecdysone, a hormone required for the initiation of metamorphosis. The chain is Ras-like protein 1 from Drosophila persimilis (Fruit fly).